Reading from the N-terminus, the 307-residue chain is MQSANLSSAKSFRNIGLIGRPDKISVVETLCLIHDHLRGLGLHVIFDQETAELVPYTNVQTASRSLLGEVVDLVIVVGGDGSLLHAARALVRHHTPVIGINRGRLGFLTDIKPADALFKLDQVLKGHFQLDRRFLLEMEVRTKGETLYDAIALNDVVLHSGKSVHMIDFELQIDGQYVYRQHSDGLIVSTPTGSTAYALSGGGPILHPSMDAIALVPMHPHTLSSRPIVVGGQSEIKLTIRENRVLPMVSADGQHSVSLNVGDCVHIRKHPFKLNLLHPPGYDFYMACRTKLGWNQDFDLIKEQDDS.

Asp-80 serves as the catalytic Proton acceptor. NAD(+) is bound by residues 80–81 (DG), His-85, 154–155 (ND), His-165, His-182, Asp-184, 195–200 (TAYALS), and Gln-254.

This sequence belongs to the NAD kinase family. A divalent metal cation is required as a cofactor.

It is found in the cytoplasm. The catalysed reaction is NAD(+) + ATP = ADP + NADP(+) + H(+). Functionally, involved in the regulation of the intracellular balance of NAD and NADP, and is a key enzyme in the biosynthesis of NADP. Catalyzes specifically the phosphorylation on 2'-hydroxyl of the adenosine moiety of NAD to yield NADP. The protein is NAD kinase of Acinetobacter baylyi (strain ATCC 33305 / BD413 / ADP1).